Here is an 844-residue protein sequence, read N- to C-terminus: DNA mismatch repair protein MutS (844 aa).

An ATP-binding site is contributed by Gly602 to Ser609.

It belongs to the DNA mismatch repair MutS family.

Its function is as follows. This protein is involved in the repair of mismatches in DNA. It is possible that it carries out the mismatch recognition step. This protein has a weak ATPase activity. The chain is DNA mismatch repair protein MutS from Streptococcus pneumoniae serotype 19F (strain G54).